Here is a 472-residue protein sequence, read N- to C-terminus: Tryptophanase (472 aa).

An N6-(pyridoxal phosphate)lysine modification is found at Lys-270.

Belongs to the beta-eliminating lyase family. Homotetramer. Requires pyridoxal 5'-phosphate as cofactor.

It carries out the reaction L-tryptophan + H2O = indole + pyruvate + NH4(+). It participates in amino-acid degradation; L-tryptophan degradation via pyruvate pathway; indole and pyruvate from L-tryptophan: step 1/1. This chain is Tryptophanase (tnaA), found in Vibrio cholerae serotype O1 (strain ATCC 39315 / El Tor Inaba N16961).